The sequence spans 111 residues: Cytochrome c (111 aa).

Ser1 bears the N-acetylserine mark. Residues Cys22, Cys25, and His26 each coordinate heme c. An N6,N6,N6-trimethyllysine modification is found at Lys80. Heme c is bound at residue Met88.

Belongs to the cytochrome c family. Post-translationally, binds 1 heme c group covalently per subunit.

It is found in the mitochondrion intermembrane space. Functionally, electron carrier protein. The oxidized form of the cytochrome c heme group can accept an electron from the heme group of the cytochrome c1 subunit of cytochrome reductase. Cytochrome c then transfers this electron to the cytochrome oxidase complex, the final protein carrier in the mitochondrial electron-transport chain. The protein is Cytochrome c of Ulva intestinalis (Hollow green nori).